Reading from the N-terminus, the 596-residue chain is Elongation factor 4 (596 aa).

Positions Lys-2–Asn-183 constitute a tr-type G domain. Residues Asp-14–Thr-19 and Asn-130–Asp-133 each bind GTP.

Belongs to the TRAFAC class translation factor GTPase superfamily. Classic translation factor GTPase family. LepA subfamily.

The protein localises to the cell inner membrane. It catalyses the reaction GTP + H2O = GDP + phosphate + H(+). Its function is as follows. Required for accurate and efficient protein synthesis under certain stress conditions. May act as a fidelity factor of the translation reaction, by catalyzing a one-codon backward translocation of tRNAs on improperly translocated ribosomes. Back-translocation proceeds from a post-translocation (POST) complex to a pre-translocation (PRE) complex, thus giving elongation factor G a second chance to translocate the tRNAs correctly. Binds to ribosomes in a GTP-dependent manner. In Wolinella succinogenes (strain ATCC 29543 / DSM 1740 / CCUG 13145 / JCM 31913 / LMG 7466 / NCTC 11488 / FDC 602W) (Vibrio succinogenes), this protein is Elongation factor 4.